A 438-amino-acid polypeptide reads, in one-letter code: UDP-N-acetylglucosamine 1-carboxyvinyltransferase 1 (438 aa).

22–23 (KN) contributes to the phosphoenolpyruvate binding site. Residue Arg95 participates in UDP-N-acetyl-alpha-D-glucosamine binding. Cys119 (proton donor) is an active-site residue. Cys119 bears the 2-(S-cysteinyl)pyruvic acid O-phosphothioketal mark. Residues 124-128 (RPIDL), Asp307, and Val329 contribute to the UDP-N-acetyl-alpha-D-glucosamine site.

This sequence belongs to the EPSP synthase family. MurA subfamily.

The protein resides in the cytoplasm. The catalysed reaction is phosphoenolpyruvate + UDP-N-acetyl-alpha-D-glucosamine = UDP-N-acetyl-3-O-(1-carboxyvinyl)-alpha-D-glucosamine + phosphate. It functions in the pathway cell wall biogenesis; peptidoglycan biosynthesis. In terms of biological role, cell wall formation. Adds enolpyruvyl to UDP-N-acetylglucosamine. This Lactiplantibacillus plantarum (strain ATCC BAA-793 / NCIMB 8826 / WCFS1) (Lactobacillus plantarum) protein is UDP-N-acetylglucosamine 1-carboxyvinyltransferase 1.